We begin with the raw amino-acid sequence, 155 residues long: 3-hydroxyacyl-[acyl-carrier-protein] dehydratase FabZ (155 aa).

His-57 is a catalytic residue.

It belongs to the thioester dehydratase family. FabZ subfamily.

It localises to the cytoplasm. It carries out the reaction a (3R)-hydroxyacyl-[ACP] = a (2E)-enoyl-[ACP] + H2O. Its function is as follows. Involved in unsaturated fatty acids biosynthesis. Catalyzes the dehydration of short chain beta-hydroxyacyl-ACPs and long chain saturated and unsaturated beta-hydroxyacyl-ACPs. The protein is 3-hydroxyacyl-[acyl-carrier-protein] dehydratase FabZ of Sorangium cellulosum (strain So ce56) (Polyangium cellulosum (strain So ce56)).